A 2939-amino-acid polypeptide reads, in one-letter code: Serine/threonine-protein kinase tel1 (2939 aa).

Disordered regions lie at residues 193–212, 695–718, and 859–886; these read GTSV…RAGS, PPED…AADS, and KTRR…ETRK. The segment covering 697–715 has biased composition (basic and acidic residues); the sequence is EDSHKATSTDQPKREEIRA. The 603-residue stretch at 1869 to 2471 folds into the FAT domain; sequence IAAAAATRCG…MYQIWSGVKA (603 aa). The PI3K/PI4K catalytic domain occupies 2577–2890; it reads FEPQMSIASG…DKKSTKNLNE (314 aa). The tract at residues 2583 to 2589 is G-loop; that stretch reads IASGVSA. A catalytic loop region spans residues 2755 to 2763; that stretch reads GLGDRHGHN. The tract at residues 2775-2799 is activation loop; sequence HIDLGVAFELGRILPVPELVPFRLT. The tract at residues 2869–2894 is disordered; that stretch reads DVVEAEDERRAGDKKSTKNLNEPSEA. Residues 2875 to 2884 show a composition bias toward basic and acidic residues; it reads DERRAGDKKS. In terms of domain architecture, FATC spans 2907-2939; it reads KTLSVMATVNDLINQATDERNLAVLFCGWAAYA.

Belongs to the PI3/PI4-kinase family. ATM subfamily. As to quaternary structure, associates with DNA double-strand breaks.

The protein localises to the nucleus. It is found in the chromosome. The protein resides in the telomere. It carries out the reaction L-seryl-[protein] + ATP = O-phospho-L-seryl-[protein] + ADP + H(+). The enzyme catalyses L-threonyl-[protein] + ATP = O-phospho-L-threonyl-[protein] + ADP + H(+). Its function is as follows. Serine/threonine protein kinase which activates checkpoint signaling upon genotoxic stresses such as ionizing radiation (IR), ultraviolet light (UV), or DNA replication stalling, thereby acting as a DNA damage sensor. Recognizes the substrate consensus sequence [ST]-Q. Phosphorylates histone H2A to form H2AS128ph (gamma-H2A) at sites of DNA damage, involved in the regulation of DNA damage response mechanism. Required for the control of telomere length and genome stability. This Neurospora crassa (strain ATCC 24698 / 74-OR23-1A / CBS 708.71 / DSM 1257 / FGSC 987) protein is Serine/threonine-protein kinase tel1 (mus-21).